The primary structure comprises 856 residues: FO synthase (856 aa).

Radical SAM core domains lie at 84–336 (ISYS…APPN) and 544–785 (VTFV…SHIQ). Residues 85 to 417 (SYSRKVFIPV…PRVRGHVVAL (333 aa)) are cofG-like. Cys98, Cys102, Cys105, Cys558, Cys562, and Cys565 together coordinate [4Fe-4S] cluster. The segment at 521–854 (DGPALEAVAA…RQRTTTYALL (334 aa)) is cofH-like.

It in the N-terminal section; belongs to the radical SAM superfamily. CofG family. This sequence in the C-terminal section; belongs to the radical SAM superfamily. CofH family. Requires [4Fe-4S] cluster as cofactor.

The catalysed reaction is 5-amino-6-(D-ribitylamino)uracil + L-tyrosine + S-adenosyl-L-methionine = 5-amino-5-(4-hydroxybenzyl)-6-(D-ribitylimino)-5,6-dihydrouracil + 2-iminoacetate + 5'-deoxyadenosine + L-methionine + H(+). The enzyme catalyses 5-amino-5-(4-hydroxybenzyl)-6-(D-ribitylimino)-5,6-dihydrouracil + S-adenosyl-L-methionine = 7,8-didemethyl-8-hydroxy-5-deazariboflavin + 5'-deoxyadenosine + L-methionine + NH4(+) + H(+). It participates in cofactor biosynthesis; coenzyme F0 biosynthesis. Its function is as follows. Catalyzes the radical-mediated synthesis of 7,8-didemethyl-8-hydroxy-5-deazariboflavin (FO) from 5-amino-6-(D-ribitylamino)uracil and L-tyrosine. This chain is FO synthase (fbiC), found in Mycobacterium bovis (strain ATCC BAA-935 / AF2122/97).